We begin with the raw amino-acid sequence, 249 residues long: 5'-nucleotidase SurE (249 aa).

The a divalent metal cation site is built by Asp8, Asp9, Ser39, and Asn91.

Belongs to the SurE nucleotidase family. It depends on a divalent metal cation as a cofactor.

It localises to the cytoplasm. It catalyses the reaction a ribonucleoside 5'-phosphate + H2O = a ribonucleoside + phosphate. In terms of biological role, nucleotidase that shows phosphatase activity on nucleoside 5'-monophosphates. The chain is 5'-nucleotidase SurE from Pseudomonas putida (strain ATCC 47054 / DSM 6125 / CFBP 8728 / NCIMB 11950 / KT2440).